The sequence spans 446 residues: Argininosuccinate synthase (446 aa).

ATP-binding positions include 17–25 (AFSGGLDTS) and A43. Y99 contacts L-citrulline. The ATP site is built by G129 and T131. 3 residues coordinate L-aspartate: T131, N135, and D136. Position 135 (N135) interacts with L-citrulline. Residue D136 coordinates ATP. The L-citrulline site is built by R139 and S192. D194 contacts ATP. 3 residues coordinate L-citrulline: T201, E203, and E280.

It belongs to the argininosuccinate synthase family. Type 2 subfamily. As to quaternary structure, homotetramer.

The protein resides in the cytoplasm. The enzyme catalyses L-citrulline + L-aspartate + ATP = 2-(N(omega)-L-arginino)succinate + AMP + diphosphate + H(+). The protein operates within amino-acid biosynthesis; L-arginine biosynthesis; L-arginine from L-ornithine and carbamoyl phosphate: step 2/3. In Burkholderia thailandensis (strain ATCC 700388 / DSM 13276 / CCUG 48851 / CIP 106301 / E264), this protein is Argininosuccinate synthase.